Reading from the N-terminus, the 151-residue chain is Ubiquitin-conjugating enzyme E2 W (151 aa).

Met-1 is covalently cross-linked (Peptide (Met-Gly) (interchain with G-Cter in ubiquitin)). The region spanning Ser-3–Cys-151 is the UBC core domain. Cys-91 functions as the Glycyl thioester intermediate in the catalytic mechanism.

The protein belongs to the ubiquitin-conjugating enzyme family. In terms of assembly, homodimer. Interacts with FANCL. Interacts with STUB1/CHIP. In terms of processing, autoubiquitinated at Met-1.

The protein resides in the nucleus. It catalyses the reaction S-ubiquitinyl-[E1 ubiquitin-activating enzyme]-L-cysteine + [E2 ubiquitin-conjugating enzyme]-L-cysteine = [E1 ubiquitin-activating enzyme]-L-cysteine + S-ubiquitinyl-[E2 ubiquitin-conjugating enzyme]-L-cysteine.. The catalysed reaction is S-ubiquitinyl-[E1 ubiquitin-activating enzyme]-L-cysteine + [acceptor protein]-N-terminal-amino acid = [E1 ubiquitin-activating enzyme]-L-cysteine + N-terminal-ubiquitinyl-[acceptor protein].. It functions in the pathway protein modification; protein ubiquitination. Functionally, accepts ubiquitin from the E1 complex and catalyzes its covalent attachment to other proteins. Specifically monoubiquitinates the N-terminus of various substrates, including ATXN3, MAPT/TAU, POLR2H/RPB8 and STUB1/CHIP, by recognizing backbone atoms of disordered N-termini. Involved in degradation of misfolded chaperone substrates by mediating monoubiquitination of STUB1/CHIP, leading to recruitment of ATXN3 to monoubiquitinated STUB1/CHIP, and restriction of the length of ubiquitin chain attached to STUB1/CHIP substrates by ATXN3. After UV irradiation, but not after mitomycin-C (MMC) treatment, acts as a specific E2 ubiquitin-conjugating enzyme for the Fanconi anemia complex by associating with E3 ubiquitin-protein ligase FANCL and catalyzing monoubiquitination of FANCD2, a key step in the DNA damage pathway. In vitro catalyzes 'Lys-11'-linked polyubiquitination. UBE2W-catalyzed ubiquitination also occurs in the presence of inactive RING/U-box type E3s, i.e. lacking the active site cysteine residues to form thioester bonds with ubiquitin, or even in the absence of E3, albeit at a slower rate. The sequence is that of Ubiquitin-conjugating enzyme E2 W (Ube2w) from Mus musculus (Mouse).